We begin with the raw amino-acid sequence, 325 residues long: Tetraacyldisaccharide 4'-kinase (325 aa).

Residue 55 to 62 (TAGGNGKT) coordinates ATP.

Belongs to the LpxK family.

The enzyme catalyses a lipid A disaccharide + ATP = a lipid IVA + ADP + H(+). It participates in glycolipid biosynthesis; lipid IV(A) biosynthesis; lipid IV(A) from (3R)-3-hydroxytetradecanoyl-[acyl-carrier-protein] and UDP-N-acetyl-alpha-D-glucosamine: step 6/6. Functionally, transfers the gamma-phosphate of ATP to the 4'-position of a tetraacyldisaccharide 1-phosphate intermediate (termed DS-1-P) to form tetraacyldisaccharide 1,4'-bis-phosphate (lipid IVA). This is Tetraacyldisaccharide 4'-kinase from Salmonella paratyphi C (strain RKS4594).